Reading from the N-terminus, the 541-residue chain is Tetratricopeptide repeat protein 8 (541 aa).

The TPR 1 repeat unit spans residues 14–47 (YFRRRKFQLCADLCTQMLEKSPYDQEPDPELPVH). The tract at residues 118 to 137 (PITGFLRPSTQSGRPGTMEQ) is disordered. TPR repeat units follow at residues 251–284 (WWWK…QEMV), 285–317 (DTFL…FPGE), 318–351 (VTLL…DNTH), 352–385 (VEAI…GIYN), 386–419 (GQLF…AENE), 423–456 (ADVW…NNNH), and 457–490 (AEAY…APHM).

As to quaternary structure, part of BBSome complex, that contains BBS1, BBS2, BBS4, BBS5, BBS7, BBS8/TTC8, BBS9 and BBIP10. Interacts with PCM1. Interacts with CCDC28B. Interacts with PKD1. In terms of tissue distribution, widely expressed.

It is found in the cytoplasm. The protein resides in the cytoskeleton. Its subcellular location is the microtubule organizing center. The protein localises to the centrosome. It localises to the cell projection. It is found in the cilium membrane. The protein resides in the centriolar satellite. Its subcellular location is the cilium. Its function is as follows. The BBSome complex is thought to function as a coat complex required for sorting of specific membrane proteins to the primary cilia. The BBSome complex is required for ciliogenesis but is dispensable for centriolar satellite function. This ciliogenic function is mediated in part by the Rab8 GDP/GTP exchange factor, which localizes to the basal body and contacts the BBSome. Rab8(GTP) enters the primary cilium and promotes extension of the ciliary membrane. Firstly the BBSome associates with the ciliary membrane and binds to RAB3IP/Rabin8, the guanosyl exchange factor (GEF) for Rab8 and then the Rab8-GTP localizes to the cilium and promotes docking and fusion of carrier vesicles to the base of the ciliary membrane. The BBSome complex, together with the LTZL1, controls SMO ciliary trafficking and contributes to the sonic hedgehog (SHH) pathway regulation. Required for proper BBSome complex assembly and its ciliary localization. This chain is Tetratricopeptide repeat protein 8 (TTC8), found in Homo sapiens (Human).